Here is a 313-residue protein sequence, read N- to C-terminus: Porphobilinogen deaminase (313 aa).

Residue cysteine 242 is modified to S-(dipyrrolylmethanemethyl)cysteine.

Belongs to the HMBS family. Monomer. The cofactor is dipyrromethane.

The enzyme catalyses 4 porphobilinogen + H2O = hydroxymethylbilane + 4 NH4(+). Its pathway is porphyrin-containing compound metabolism; protoporphyrin-IX biosynthesis; coproporphyrinogen-III from 5-aminolevulinate: step 2/4. Functionally, tetrapolymerization of the monopyrrole PBG into the hydroxymethylbilane pre-uroporphyrinogen in several discrete steps. In Photorhabdus laumondii subsp. laumondii (strain DSM 15139 / CIP 105565 / TT01) (Photorhabdus luminescens subsp. laumondii), this protein is Porphobilinogen deaminase.